Consider the following 175-residue polypeptide: Interleukin-10 (175 aa).

Positions 1 to 18 (MPSSALLYCLIFLAGVAA) are cleaved as a signal peptide. 2 cysteine pairs are disulfide-bonded: Cys26/Cys122 and Cys76/Cys128. N-linked (GlcNAc...) asparagine glycosylation occurs at Asn130.

The protein belongs to the IL-10 family. As to quaternary structure, homodimer. Interacts with IL10RA and IL10RB.

The protein resides in the secreted. Its function is as follows. Major immune regulatory cytokine that acts on many cells of the immune system where it has profound anti-inflammatory functions, limiting excessive tissue disruption caused by inflammation. Mechanistically, IL10 binds to its heterotetrameric receptor comprising IL10RA and IL10RB leading to JAK1 and STAT2-mediated phosphorylation of STAT3. In turn, STAT3 translocates to the nucleus where it drives expression of anti-inflammatory mediators. Targets antigen-presenting cells (APCs) such as macrophages and monocytes and inhibits their release of pro-inflammatory cytokines including granulocyte-macrophage colony-stimulating factor /GM-CSF, granulocyte colony-stimulating factor/G-CSF, IL-1 alpha, IL-1 beta, IL-6, IL-8 and TNF-alpha. Also interferes with antigen presentation by reducing the expression of MHC-class II and co-stimulatory molecules, thereby inhibiting their ability to induce T cell activation. In addition, controls the inflammatory response of macrophages by reprogramming essential metabolic pathways including mTOR signaling. This is Interleukin-10 (IL10) from Sus scrofa (Pig).